Reading from the N-terminus, the 498-residue chain is MRKAAVGAAVVCTAAVCAAAAVLVRQRMKSSSKWGRVMAILKELDDNCGTPLGKLRQVADAMTVEMHAGLASEGASKLKMLISYVDNLPTGDEHGLFYALDLGGTNFRVLRVKLGGKEKRVVEQEFDEVSIPPELMVGTSEQLFDYIAEALAKFVATESEGLHPEPNKQRELGFTFSFPVKQTSIASGTLIRWTKGFNIEDTVGEDVVAELTKAMLRKGVDMRVTALVNDTVGTLAGGRYYKEDVIAAVILGTGTNAAYVERASAIHKWHGPLPKSGEMVINMEWGNFRSSYLPLTEYDIALDEESLNPGEQIFEKMISGMYLGEIVRRVLYRMADEASLFGDTVPSKLKTPFILRTPDMSAMHHDTSPDLKVVASKLKDVLGIPNSSLKVRKIIVDVCDVIASRGACISAAGILGIIKKLGRDTLKQGENQKSVIALDGGLFEHYAKFRECMEDSLKELLGDEVAETIVIEHSNDGSGIGAALLAASHSQYLEEDES.

Residues Ala4–Val24 traverse the membrane as a helical segment. Residues Gly35–Ala487 form the Hexokinase domain. A hexokinase small subdomain region spans residues Thr90–Val228. 3 residues coordinate ADP: Gly104, Thr105, and Asn106. Residues Thr194, Lys195, Asn229, and Asp230 each contribute to the D-glucose site. A hexokinase large subdomain region spans residues Asn229–Asp476. Thr253 serves as a coordination point for ADP. D-glucose is bound by residues Asn256, Glu284, and Glu315. Gly441 contacts ADP.

Belongs to the hexokinase family.

It is found in the plastid. Its subcellular location is the chloroplast outer membrane. The enzyme catalyses a D-hexose + ATP = a D-hexose 6-phosphate + ADP + H(+). It carries out the reaction D-fructose + ATP = D-fructose 6-phosphate + ADP + H(+). The catalysed reaction is D-glucose + ATP = D-glucose 6-phosphate + ADP + H(+). It participates in carbohydrate metabolism; hexose metabolism. Its pathway is carbohydrate degradation; glycolysis; D-glyceraldehyde 3-phosphate and glycerone phosphate from D-glucose: step 1/4. In terms of biological role, fructose and glucose phosphorylating enzyme. This Spinacia oleracea (Spinach) protein is Hexokinase-1 (HXK1).